Here is an 835-residue protein sequence, read N- to C-terminus: MIMHSNYDPNIIEKKWQRYWEEQHAYACDIDPNKKKYYVLEMWPYPSGNIHMGHVRNYSIGDVIARIKRMQGYNVLHPMGWDAFGLPAELAAIKHHTQPADWTYTNINEMRAQLKRLGYSYDWQREIATCDPDYYQWEQLFFVDCFEKGLVYRKKAPQNWCPSCNTVLANEQVIEGSCWRCDTSIIQKELTQWFLKITDYAEELLDDLTTLKYSWPDRVITMQENWLGKSTGVEISFPIESSQDFITIFTTRPDTIFGATAIILAPEHPILETLLNDTPQKEKLYNVIEKMRNMDRLERQSNLLTKEGIFIDRYCINPCSGDKIPIWIGNFVLADYGTGAIMAVPAHDQRDFDFCKKYNLPISIVIQPDELQINEHTIVEPWTGLGTLIHSGQFTGLTNKEAKEKITQYLEKIGKATRVVSWRLRDWNISRQRYWGTPIPIIYCKNCGVVSVPKNELPVILPTNITINEDGSSPLPQESSFIDCMCPQCGGIAKRETDTMDTFVDSSWYFARFVDPKNTKQPFDTSIAKYWLNVDQYIGGVEHAILHLLYSRFFTKLLRDLGYLPSNINEPFAKLLTQGMVIKDGSKMSKSKGNIVDPNQMINIYGADTIRLFCLFAAPPERDFDWSDSGIEGSYRFLHRVWRLFIDVQPHIHTTHAGNSTVIETTTALTKDVKRKEHITIKKVSEDIENKYQFNTAIASIMEFVNTLYLSKNELILTVEGKNILSSAIATVLTLLSPMTPHICEELWSYLGHSTSISLEPWPKWDPQALLKDVVTIVVQINGKVRNKFEVPMDLSKEELEHIIFNDTKITQYLEGKTIQKHIIIPNKIINIVTT.

Residues 44–54 (PYPSGNIHMGH) carry the 'HIGH' region motif. A 'KMSKS' region motif is present at residues 587–591 (KMSKS). An ATP-binding site is contributed by K590.

The protein belongs to the class-I aminoacyl-tRNA synthetase family.

It is found in the cytoplasm. It catalyses the reaction tRNA(Leu) + L-leucine + ATP = L-leucyl-tRNA(Leu) + AMP + diphosphate. The protein is Leucine--tRNA ligase of Lawsonia intracellularis (strain PHE/MN1-00).